The primary structure comprises 348 residues: Dihydroorotase (348 aa).

2 residues coordinate Zn(2+): His14 and His16. Residues 16 to 18 (HLR) and Asn42 contribute to the substrate site. Zn(2+)-binding residues include Lys100, His137, and His175. Residue Lys100 is modified to N6-carboxylysine. His137 serves as a coordination point for substrate. Substrate is bound at residue Leu220. Asp248 contacts Zn(2+). Residue Asp248 is part of the active site. Residues His252 and Ala264 each contribute to the substrate site.

It belongs to the metallo-dependent hydrolases superfamily. DHOase family. Class II DHOase subfamily. As to quaternary structure, homodimer. The cofactor is Zn(2+).

It carries out the reaction (S)-dihydroorotate + H2O = N-carbamoyl-L-aspartate + H(+). The protein operates within pyrimidine metabolism; UMP biosynthesis via de novo pathway; (S)-dihydroorotate from bicarbonate: step 3/3. In terms of biological role, catalyzes the reversible cyclization of carbamoyl aspartate to dihydroorotate. This Pseudomonas putida (strain ATCC 700007 / DSM 6899 / JCM 31910 / BCRC 17059 / LMG 24140 / F1) protein is Dihydroorotase.